Reading from the N-terminus, the 274-residue chain is uncharacterized protein (274 aa).

This is an uncharacterized protein from Mycobacterium tuberculosis (strain ATCC 25618 / H37Rv).